We begin with the raw amino-acid sequence, 101 residues long: NAD(P)H-quinone oxidoreductase subunit 4L, chloroplastic (101 aa).

3 helical membrane-spanning segments follow: residues 2–22 (MLEH…YGLI), 32–52 (MCLE…SDLF), and 61–81 (IFSI…PAIV).

It belongs to the complex I subunit 4L family. In terms of assembly, NDH is composed of at least 16 different subunits, 5 of which are encoded in the nucleus.

The protein resides in the plastid. It is found in the chloroplast thylakoid membrane. It carries out the reaction a plastoquinone + NADH + (n+1) H(+)(in) = a plastoquinol + NAD(+) + n H(+)(out). The enzyme catalyses a plastoquinone + NADPH + (n+1) H(+)(in) = a plastoquinol + NADP(+) + n H(+)(out). Functionally, NDH shuttles electrons from NAD(P)H:plastoquinone, via FMN and iron-sulfur (Fe-S) centers, to quinones in the photosynthetic chain and possibly in a chloroplast respiratory chain. The immediate electron acceptor for the enzyme in this species is believed to be plastoquinone. Couples the redox reaction to proton translocation, and thus conserves the redox energy in a proton gradient. The protein is NAD(P)H-quinone oxidoreductase subunit 4L, chloroplastic of Nymphaea alba (White water-lily).